A 322-amino-acid polypeptide reads, in one-letter code: Tlg2p-like protein a (322 aa).

At 1-301 (MATRNRTLLF…QRHGGMVKCA (301 aa)) the chain is on the cytoplasmic side. Positions 116-146 (KEDQHNIESLTQEITFLLKKSEKQLQRLSAS) form a coiled coil. Residues 226-288 (EEVSVEREKE…EDGLKQLQKA (63 aa)) enclose the t-SNARE coiled-coil homology domain. The helical; Anchor for type IV membrane protein transmembrane segment at 302-322 (SVLVILCFIMLLLLILKEIFL) threads the bilayer.

Belongs to the syntaxin family. As to quaternary structure, interacts with VTI12 and SYP61 to form a t-SNARE complex and with VPS45. Interacts with TNO1. Binds to YKT61 and YKT62. Core constituent of the SNARE complex required for membrane fusion at the trans-Golgi network. In terms of tissue distribution, mostly expressed in flowers, to a lower extent in leaves and roots, and, at low levels, in stems.

The protein resides in the golgi apparatus. The protein localises to the trans-Golgi network membrane. In terms of biological role, contributes to the regulation of secretory and vacuolar transport pathways in the post-Golgi network, and to the maintenance of the Golgi apparatus and trans-Golgi network (TGN) morphologies. Together with VTI12, required for membrane fusion. Vesicle trafficking protein that functions in the secretory pathway and mediates liposome fusion; the fusion of phospholipid vesicles containing SYP41 and VTI12 is triggered by YKT61 and YKT62. Required for extracellular resistance responses to a fungal pathogen. Also involved in the protection of chloroplasts from salicylic acid-dependent biotic stress. In Arabidopsis thaliana (Mouse-ear cress), this protein is Tlg2p-like protein a.